A 264-amino-acid polypeptide reads, in one-letter code: Movement protein (264 aa).

The tract at residues 219 to 264 (PSYRSRSQSVGGRGKRHSKPPNRRLDSASEESSSVSFEDGLQSDHT) is disordered. Residues 231–240 (RGKRHSKPPN) are compositionally biased toward basic residues.

It belongs to the tobamovirus movement protein family.

Its subcellular location is the host cytoplasm. The protein resides in the host cytoskeleton. It localises to the host cell junction. The protein localises to the host plasmodesma. Its function is as follows. Transports viral genome to neighboring plant cells directly through plasmosdesmata, without any budding. The movement protein allows efficient cell to cell propagation, by bypassing the host cell wall barrier. Forms a ribonucleoprotein complex with viral RNA. Binds microtubules and modulates microtubule stability. Can bind double-stranded DNA. The sequence is that of Movement protein (MP) from Cucumber green mottle mosaic virus (strain watermelon SH) (CGMMV).